The chain runs to 141 residues: Nucleoside diphosphate kinase (141 aa).

Residues K11, F59, R87, T93, R104, and N114 each coordinate ATP. The active-site Pros-phosphohistidine intermediate is H117.

This sequence belongs to the NDK family. In terms of assembly, homotetramer. Mg(2+) is required as a cofactor.

The protein localises to the cytoplasm. It carries out the reaction a 2'-deoxyribonucleoside 5'-diphosphate + ATP = a 2'-deoxyribonucleoside 5'-triphosphate + ADP. The catalysed reaction is a ribonucleoside 5'-diphosphate + ATP = a ribonucleoside 5'-triphosphate + ADP. In terms of biological role, major role in the synthesis of nucleoside triphosphates other than ATP. The ATP gamma phosphate is transferred to the NDP beta phosphate via a ping-pong mechanism, using a phosphorylated active-site intermediate. The chain is Nucleoside diphosphate kinase from Photorhabdus laumondii subsp. laumondii (strain DSM 15139 / CIP 105565 / TT01) (Photorhabdus luminescens subsp. laumondii).